The chain runs to 740 residues: D-ornithine 4,5-aminomutase subunit beta (740 aa).

Substrate-binding positions include glutamate 81, tyrosine 160, histidine 182, and 294–296 (RAQ). Residues 602 to 739 (PLKIVAATVG…VKKRREMREG (138 aa)) enclose the B12-binding domain. Adenosylcob(III)alamin-binding positions include 614 to 616 (EHS) and histidine 615. Position 626 is an N6-(pyridoxal phosphate)lysine (lysine 626). Adenosylcob(III)alamin contacts are provided by residues 664–669 (STIISH), threonine 700, and serine 720.

As to quaternary structure, heterotetramer of 2 alpha (OraS) and 2 beta (OraE) subunits. Requires adenosylcob(III)alamin as cofactor. Pyridoxal 5'-phosphate is required as a cofactor.

The catalysed reaction is D-ornithine = (2R,4S)-2,4-diaminopentanoate. Its activity is regulated as follows. Increased activity in the presence of dithiothreitol (DTT) in vitro. Inhibited by 1 mM potassium phosphate and potassium chloride. Inhibited by L-alpha-ornithine, D,L-alpha-lysine, L-beta-lysine (50%-60%), L-alpha-lysine (26%) and by delta-amino-n-valeric acid to a lesser extent. Significant decrease in activity is observed in the presence of 0.2 mM p-chloromercuribenzoate, N-ethylmaleimide and also by 2 mM iodoacetate to a lesser extent but not inhibited by arsenite. In terms of biological role, component of a complex that catalyzes the reversible migration of the omega amino group of D-ornithine to C-4 to form (2R,4S)-2,4-diaminopentanoic acid. OraE may be the catalytic subunit. Active only on D-ornithine and 2,4-diaminopentanoic acid but not active on L-ornithine, L-beta-lysine, L-alpha-lysine or D-alpha-lysine. In Acetoanaerobium sticklandii (strain ATCC 12662 / DSM 519 / JCM 1433 / CCUG 9281 / NCIMB 10654 / HF) (Clostridium sticklandii), this protein is D-ornithine 4,5-aminomutase subunit beta (oraE).